The sequence spans 180 residues: Probable macrolide acetyltransferase (180 aa).

Belongs to the transferase hexapeptide repeat family.

The sequence is that of Probable macrolide acetyltransferase from Lysinibacillus sphaericus (Bacillus sphaericus).